Consider the following 2946-residue polypeptide: Neurobeachin (2946 aa).

Residues 971–995 (ENIKKGKKGNVSTISGLSSQTTGAK) are disordered. The span at 980–993 (NVSTISGLSSQTTG) shows a compositional bias: polar residues. 2 positions are modified to phosphoserine: S1011 and S1014. One copy of the WD 1 repeat lies at 1326–1368 (TTMFRIPEFKWSPMHQRLLTDLLFALETDVHVWRSHSTKSVMD). 4 disordered regions span residues 1490 to 1531 (QRDR…LSPI), 1651 to 1675 (TIKE…HTDS), 1711 to 1731 (VKKS…PATS), and 1841 to 1860 (GAVD…VNGA). A compositionally biased stretch (polar residues) spans 1497–1517 (SSHGSSKPQEVPQSVTATAAS). S1529 carries the phosphoserine modification. A phosphoserine mark is found at S1714 and S1717. Residues 1716–1731 (ESLTENPSETLKPATS) show a composition bias toward polar residues. Residues 1845–1855 (SGSSSSSSSSS) show a composition bias toward low complexity. Residue S2138 is modified to Phosphoserine. Residues 2147 to 2255 (NLAGPVVLST…TVKKVVYSLP (109 aa)) form the BEACH-type PH domain. A BEACH domain is found at 2274-2563 (ATPRQLYKSS…QLLIEPHPPR (290 aa)). S2575 is subject to Phosphoserine. WD repeat units lie at residues 2718-2761 (GHWD…HIIG), 2778-2818 (GHDH…RALE), 2860-2899 (EIND…QLYI), and 2902-2941 (GCDA…WHYE).

This sequence belongs to the WD repeat neurobeachin family. As to quaternary structure, interacts with RII subunit of PKA. In terms of tissue distribution, predominant in many brain structures. Also expressed at medium levels in spleen, thymus, prostate, testis and ovary. Low level expression is seen in heart, kidney, pancreas, skeletal muscle and intestine.

Its subcellular location is the cytoplasm. The protein localises to the membrane. In terms of biological role, binds to type II regulatory subunits of protein kinase A and anchors/targets them to the membrane. May anchor the kinase to cytoskeletal and/or organelle-associated proteins. In Homo sapiens (Human), this protein is Neurobeachin.